The sequence spans 330 residues: Ribosomal RNA large subunit methyltransferase F (330 aa).

Belongs to the methyltransferase superfamily. METTL16/RlmF family.

The protein resides in the cytoplasm. The catalysed reaction is adenosine(1618) in 23S rRNA + S-adenosyl-L-methionine = N(6)-methyladenosine(1618) in 23S rRNA + S-adenosyl-L-homocysteine + H(+). Its function is as follows. Specifically methylates the adenine in position 1618 of 23S rRNA. This is Ribosomal RNA large subunit methyltransferase F from Pseudoalteromonas atlantica (strain T6c / ATCC BAA-1087).